The chain runs to 534 residues: Putative fimbrium tip subunit Fim1C (534 aa).

The first 21 residues, 1-21, serve as a signal peptide directing secretion; it reads MKQYKLMQVALLAILLFGWAG. Residue Cys-22 is the site of N-palmitoyl cysteine attachment. Cys-22 carries the S-diacylglycerol cysteine lipid modification. The propeptide occupies 22-54; sequence CSQNEEEVPGNVRNGIVLNVTDTGIISNEPSTR.

It belongs to the bacteroidetes fimbrillin superfamily. Mfa-like family. May be part of the fimbrial tip.

The protein localises to the fimbrium. It localises to the cell outer membrane. Functionally, probably a component of the fimbrium tip. Fimbriae are filamentous appendages on the cell surface that mediate cell adhesion and biofilm formation. The chain is Putative fimbrium tip subunit Fim1C from Bacteroides ovatus (strain ATCC 8483 / DSM 1896 / JCM 5824 / BCRC 10623 / CCUG 4943 / NCTC 11153).